The following is a 163-amino-acid chain: Nucleotide-binding protein Ava_2001 (163 aa).

The protein belongs to the YajQ family.

In terms of biological role, nucleotide-binding protein. This Trichormus variabilis (strain ATCC 29413 / PCC 7937) (Anabaena variabilis) protein is Nucleotide-binding protein Ava_2001.